A 73-amino-acid chain; its full sequence is MAKEDAIEVEGTVVETLPNAMFRVELPNGHRILAHISGKMRMHFIRILPGDKVTVELSPYDLNRGRITYRSKS.

One can recognise an S1-like domain in the interval 1–72 (MAKEDAIEVE…NRGRITYRSK (72 aa)).

The protein belongs to the IF-1 family. In terms of assembly, component of the 30S ribosomal translation pre-initiation complex which assembles on the 30S ribosome in the order IF-2 and IF-3, IF-1 and N-formylmethionyl-tRNA(fMet); mRNA recruitment can occur at any time during PIC assembly.

It localises to the cytoplasm. Its function is as follows. One of the essential components for the initiation of protein synthesis. Stabilizes the binding of IF-2 and IF-3 on the 30S subunit to which N-formylmethionyl-tRNA(fMet) subsequently binds. Helps modulate mRNA selection, yielding the 30S pre-initiation complex (PIC). Upon addition of the 50S ribosomal subunit IF-1, IF-2 and IF-3 are released leaving the mature 70S translation initiation complex. The polypeptide is Translation initiation factor IF-1 (Syntrophobacter fumaroxidans (strain DSM 10017 / MPOB)).